Reading from the N-terminus, the 208-residue chain is Fibroblast growth factor 10 (208 aa).

The signal sequence occupies residues 1-37 (MWKWILTHCASAFPHLPGCCCCCFLLLFLVSSVPVTC). N-linked (GlcNAc...) asparagine glycans are attached at residues asparagine 51 and asparagine 196.

Belongs to the heparin-binding growth factors family. As to quaternary structure, interacts with FGFR1 and FGFR2. Interacts with FGFBP1.

The protein resides in the secreted. Functionally, plays an important role in the regulation of embryonic development, cell proliferation and cell differentiation. Required for normal branching morphogenesis. May play a role in wound healing. This is Fibroblast growth factor 10 (FGF10) from Homo sapiens (Human).